The primary structure comprises 443 residues: Histone deacetylase 10, chloroplastic (443 aa).

The N-terminal 65 residues, 1–65, are a transit peptide targeting the chloroplast; it reads MEQLWVPSLP…PSHNGTSISD (65 aa). The histone deacetylase stretch occupies residues 82–412; it reads DAHILYCTSP…FRAFLGEPSL (331 aa). Catalysis depends on His-222, which acts as the Proton donor/acceptor. Zn(2+)-binding residues include Asp-259, His-261, and Asp-346.

The protein belongs to the histone deacetylase family. Zn(2+) is required as a cofactor. In terms of tissue distribution, expressed in leaves. Expressed in coleoptiles, leaves, flag leaves and flowers. Expressed at low levels in roots.

Its subcellular location is the plastid. It is found in the chloroplast. It localises to the mitochondrion. It catalyses the reaction N-acetylserotonin + H2O = serotonin + acetate. It carries out the reaction N-acetyltyramine + H2O = tyramine + acetate. The enzyme catalyses N-acetyltryptamine + H2O = tryptamine + acetate. The catalysed reaction is melatonin + H2O = 5-methoxytryptamine + acetate. With respect to regulation, the activity of this enzyme is not inhibited by butyrate, a well-known histone deacetylase inhibitor. In terms of biological role, involved in the regulation of melatonin biosynthesis by catalyzing the deacetylation of N-acetylserotonin to produce serotonin. N-acetylserotonin is methylated by acetylserotonin O-methyltransferase (ASMT) to produce melatonin (N-acetyl-5-methoxytryptamine). Deacetylates melatonin to produce 5-methoxytryptamine. In vitro, deacetylates N-acetyltyramine and N-acetyltryptamine to produce tyramine and tryptamine, respectively. This is Histone deacetylase 10, chloroplastic from Oryza sativa subsp. japonica (Rice).